The primary structure comprises 85 residues: MKAVILSLVAAFLYSGYTLNCRKCDETVCQLYWTCTEAETLCYILKNKTDTMGLQAIQGCAETCPVPEPDQEVKCCKTDYCNSYF.

The first 18 residues, methionine 1–threonine 18, serve as a signal peptide directing secretion. Disulfide bonds link cysteine 21/cysteine 42, cysteine 24/cysteine 29, cysteine 35/cysteine 60, cysteine 64/cysteine 75, and cysteine 76/cysteine 81.

The protein belongs to the three-finger toxin family. Ancestral subfamily. As to expression, expressed by the venom gland.

It localises to the secreted. The protein is Probable weak neurotoxin 3FTx-Lio1 of Erythrolamprus poecilogyrus (Water snake).